A 75-amino-acid chain; its full sequence is Translational regulator CsrA (75 aa).

This sequence belongs to the CsrA/RsmA family. As to quaternary structure, homodimer; the beta-strands of each monomer intercalate to form a hydrophobic core, while the alpha-helices form wings that extend away from the core. Interacts with FliW.

It localises to the cytoplasm. In terms of biological role, a translational regulator that binds mRNA to regulate translation initiation and/or mRNA stability. Usually binds in the 5'-UTR at or near the Shine-Dalgarno sequence preventing ribosome-binding, thus repressing translation. Its function is probably anatagonized by FliW. Inhibits translation of flaA mRNA in vitro. Involved in post-transcriptional regulation of flagellin biosynthesis. This chain is Translational regulator CsrA, found in Campylobacter jejuni subsp. jejuni serotype O:6 (strain 81116 / NCTC 11828).